Reading from the N-terminus, the 451-residue chain is L,D-transpeptidase 5 (451 aa).

One can recognise a L,D-TPase catalytic domain in the interval 263–384 (QVVKAEVSSH…AVYGDPVEVT (122 aa)). Residues Tyr323 and 337-338 (NG) contribute to the substrate site. His342 (proton donor/acceptor) is an active-site residue. Cys360 serves as the catalytic Nucleophile. A substrate-binding site is contributed by Asn362. Residues 417 to 451 (AAKPAATQIPVTAPVTPSDAPTPSGTPTTTNGPGG) form a disordered region. Low complexity predominate over residues 437-451 (PTPSGTPTTTNGPGG).

The protein operates within cell wall biogenesis; peptidoglycan biosynthesis. In contrast to other LDT paralogs, LdtMt5 is not inactivated by the beta-lactam carbapenems; beta-lactam carbapenems form covalent adducts with other LDT paralogs but the formation of covalent adducts was not detected for LdtMt5. In terms of biological role, generates 3-&gt;3 cross-links in peptidoglycan, catalyzing the cleavage of the mDap(3)-D-Ala(4) bond of a tetrapeptide donor stem and the formation of a bond between the carbonyl of mDap(3) of the donor stem and the side chain of mDap(3) of the acceptor stem. Is specific for donor substrates containing a stem tetrapeptide since it cannot use pentapeptide stems. The chain is L,D-transpeptidase 5 (lprQ) from Mycobacterium tuberculosis (strain ATCC 25618 / H37Rv).